The sequence spans 260 residues: Indole-3-glycerol phosphate synthase (260 aa).

The protein belongs to the TrpC family.

It carries out the reaction 1-(2-carboxyphenylamino)-1-deoxy-D-ribulose 5-phosphate + H(+) = (1S,2R)-1-C-(indol-3-yl)glycerol 3-phosphate + CO2 + H2O. Its pathway is amino-acid biosynthesis; L-tryptophan biosynthesis; L-tryptophan from chorismate: step 4/5. This Nocardioides sp. (strain ATCC BAA-499 / JS614) protein is Indole-3-glycerol phosphate synthase.